The chain runs to 100 residues: uncharacterized protein (100 aa).

3 helical membrane passes run T7 to L28, A38 to I60, and L65 to V87.

The protein resides in the cell membrane. This is an uncharacterized protein from Archaeoglobus fulgidus (strain ATCC 49558 / DSM 4304 / JCM 9628 / NBRC 100126 / VC-16).